Here is a 173-residue protein sequence, read N- to C-terminus: dCTP deaminase (173 aa).

DCTP contacts are provided by residues 97–102 (RSSFAR) and aspartate 113. Glutamate 123 (proton donor/acceptor) is an active-site residue. Residues tyrosine 155 and glutamine 162 each coordinate dCTP.

The protein belongs to the dCTP deaminase family. In terms of assembly, homotrimer.

It carries out the reaction dCTP + H2O + H(+) = dUTP + NH4(+). It participates in pyrimidine metabolism; dUMP biosynthesis; dUMP from dCTP (dUTP route): step 1/2. In terms of biological role, catalyzes the deamination of dCTP to dUTP. This chain is dCTP deaminase, found in Acidianus ambivalens (Desulfurolobus ambivalens).